The following is a 343-amino-acid chain: Mas-related G-protein coupled receptor member F (343 aa).

Residues 1–44 are Extracellular-facing; sequence MAGNCSWEAHSTNQNKMCPGMSEALELYSRGFLTIEQIATLPPP. An N-linked (GlcNAc...) asparagine glycan is attached at asparagine 4. Residues 45–66 form a helical membrane-spanning segment; that stretch reads AVTNYIFLLLCLCGLVGNGLVL. The Cytoplasmic segment spans residues 67 to 82; that stretch reads WFFGFSIKRTPFSIYF. Residues 83-104 form a helical membrane-spanning segment; it reads LHLASADGIYLFSKAVIALLNM. At 105–123 the chain is on the extracellular side; sequence GTFLGSFPDYVRRVSRIVG. The chain crosses the membrane as a helical span at residues 124–144; sequence LCTFFAGVSLLPAISIERCVS. Over 145-160 the chain is Cytoplasmic; sequence VIFPMWYWRRRPKRLS. A helical membrane pass occupies residues 161 to 181; the sequence is AGVCALLWLLSFLVTSIHNYF. At 182–198 the chain is on the extracellular side; it reads CMFLGHEASGTACLNMD. The helical transmembrane segment at 199–220 threads the bilayer; sequence ISLGILLFFLFCPLMVLPCLAL. Topologically, residues 221-241 are cytoplasmic; that stretch reads ILHVECRARRRQRSAKLNHVV. The chain crosses the membrane as a helical span at residues 242–263; that stretch reads LAIVSVFLVSSIYLGIDWFLFW. Over 264 to 273 the chain is Extracellular; it reads VFQIPAPFPE. Residues 274–294 form a helical membrane-spanning segment; sequence YVTDLCICINSSAKPIVYFLA. The Cytoplasmic portion of the chain corresponds to 295–343; sequence GRDKSQRLWEPLRVVFQRALRDGAEPGDAASSTPNTVTMEMQCPSGNAS. The interval 318–343 is disordered; the sequence is AEPGDAASSTPNTVTMEMQCPSGNAS. Positions 324–343 are enriched in polar residues; sequence ASSTPNTVTMEMQCPSGNAS.

The protein belongs to the G-protein coupled receptor 1 family. Mas subfamily. In terms of tissue distribution, gut, vas deferens, uterus and aorta; barely detectable in liver, kidney, lung, and salivary gland. In the brain, markedly abundant in the cerebellum.

The protein localises to the cell membrane. In terms of biological role, orphan receptor. May bind to a neuropeptide and may regulate nociceptor function and/or development, including the sensation or modulation of pain. The chain is Mas-related G-protein coupled receptor member F (Mrgprf) from Rattus norvegicus (Rat).